A 392-amino-acid chain; its full sequence is Fasciculation and elongation protein zeta-1 (392 aa).

The tract at residues 1–36 (MEAPLVSLDEEFEDIRPSCTEEPEEKPQCLYGTSPH) is disordered. Phosphoserine is present on S58. A disordered region spans residues 175 to 196 (MQNSPDPEEEEEVLEEEDGGEI). Residues 180 to 194 (DPEEEEEVLEEEDGG) are compositionally biased toward acidic residues. Positions 230 to 298 (SELTELLDRV…KKRRKEKGLS (69 aa)) form a coiled coil. Phosphoserine is present on residues S298 and S316.

The protein belongs to the zygin family. As to quaternary structure, homodimer. Interacts with the NH2-terminal variable region (V1) of PKC zeta and weakly with that of PKC epsilon. Interacts with UBE4B and SAP30L. Interacts with SCOC and ULK1; SCOC interferes with ULK1-binding to FEZ1. Directly interacts with SCOC and UVRAG. Stabilizes the interaction between SCOC and UVRAG during amino acid starvation. In terms of processing, phosphorylated by protein kinase C zeta; which enhances interaction with UBE4B and polyubiquitination. Polyubiquitinated in a UBE4B-dependent manner; which does not lead to proteasomal degradation and may be important for neurogenic activity. Polyubiquitin linkage seems to be mainly through Lys-26.

The protein resides in the cytoplasm. The protein localises to the cytoskeleton. It is found in the microtubule organizing center. Its subcellular location is the centrosome. It localises to the cell membrane. In terms of biological role, may be involved in axonal outgrowth as component of the network of molecules that regulate cellular morphology and axon guidance machinery. May participate in the transport of mitochondria and other cargos along microtubules. This is Fasciculation and elongation protein zeta-1 (Fez1) from Mus musculus (Mouse).